The sequence spans 414 residues: Glucose-1-phosphate adenylyltransferase (414 aa).

Residues Tyr103, Gly168, 183 to 184, and Ser201 contribute to the alpha-D-glucose 1-phosphate site; that span reads EK.

The protein belongs to the bacterial/plant glucose-1-phosphate adenylyltransferase family. As to quaternary structure, homotetramer.

It carries out the reaction alpha-D-glucose 1-phosphate + ATP + H(+) = ADP-alpha-D-glucose + diphosphate. Its pathway is glycan biosynthesis; glycogen biosynthesis. In terms of biological role, involved in the biosynthesis of ADP-glucose, a building block required for the elongation reactions to produce glycogen. Catalyzes the reaction between ATP and alpha-D-glucose 1-phosphate (G1P) to produce pyrophosphate and ADP-Glc. This Thermus thermophilus (strain ATCC 27634 / DSM 579 / HB8) protein is Glucose-1-phosphate adenylyltransferase.